The following is a 243-amino-acid chain: MLTFLIPTAKEMKPVPPCYPHQLPQKSLPILEAMAELSLEELARAYSIRIEAASKEAKRLKAIAQGQSSAYPAYQLFNGLMYRHLKRDNLSKDQQDYLSKQVYITSSFYGIIPTDEKIAEHRHDFHTKVTINGQSLKHYWRPIYDQFAKDHKQIISLLSNEFRDVFSKEYQKLWISPKFMEERSGQLKTHSTISKKARGAFLTACLENNVQTKEALKQLSFAGFCYNEELSTETNYYYIKKES.

The protein belongs to the UPF0246 family.

The sequence is that of UPF0246 protein SEQ_2141 from Streptococcus equi subsp. equi (strain 4047).